Consider the following 187-residue polypeptide: Threonylcarbamoyl-AMP synthase (187 aa).

The 185-residue stretch at 3 to 187 (QVLPADAAEL…ARSGTVIREG (185 aa)) folds into the YrdC-like domain.

The protein belongs to the SUA5 family. TsaC subfamily.

The protein localises to the cytoplasm. The catalysed reaction is L-threonine + hydrogencarbonate + ATP = L-threonylcarbamoyladenylate + diphosphate + H2O. Required for the formation of a threonylcarbamoyl group on adenosine at position 37 (t(6)A37) in tRNAs that read codons beginning with adenine. Catalyzes the conversion of L-threonine, HCO(3)(-)/CO(2) and ATP to give threonylcarbamoyl-AMP (TC-AMP) as the acyladenylate intermediate, with the release of diphosphate. This is Threonylcarbamoyl-AMP synthase from Shewanella pealeana (strain ATCC 700345 / ANG-SQ1).